Reading from the N-terminus, the 124-residue chain is Glycine cleavage system H protein (124 aa).

Residues 22–103 form the Lipoyl-binding domain; it reads VFVVGITDNA…AYTAWIFKIK (82 aa). K63 carries the N6-lipoyllysine modification.

The protein belongs to the GcvH family. The glycine cleavage system is composed of four proteins: P, T, L and H. Requires (R)-lipoate as cofactor.

The glycine cleavage system catalyzes the degradation of glycine. The H protein shuttles the methylamine group of glycine from the P protein to the T protein. In Bordetella pertussis (strain Tohama I / ATCC BAA-589 / NCTC 13251), this protein is Glycine cleavage system H protein.